The primary structure comprises 66 residues: Alpha-conotoxin-like Tx2 (66 aa).

The first 21 residues, 1-21 (MGMRMMFTVFLLVVLATTVVS), serve as a signal peptide directing secretion. The propeptide occupies 22–49 (FTSGRRTFHGRNAAAKASGLVSLTDRRP). Cystine bridges form between cysteine 51–cysteine 57 and cysteine 52–cysteine 65. Residues 53–55 (SHP) form a ser-Xaa-Pro motif, crucial for potent interaction with nAChR region.

Belongs to the conotoxin A superfamily. As to expression, expressed by the venom duct.

Its subcellular location is the secreted. Functionally, alpha-conotoxins act on postsynaptic membranes, they bind to the nicotinic acetylcholine receptors (nAChR) and thus inhibit them. The sequence is that of Alpha-conotoxin-like Tx2 from Conus textile (Cloth-of-gold cone).